The primary structure comprises 524 residues: Ribonuclease Y (524 aa).

Residues Ile3–Phe23 traverse the membrane as a helical segment. Residues Gln96–Gln127 form a disordered region. A compositionally biased stretch (basic and acidic residues) spans Gly100–Glu124. The KH domain occupies Ala214–Glu280. An HD domain is found at Leu340–Ser432.

Belongs to the RNase Y family.

Its subcellular location is the cell membrane. Its function is as follows. Endoribonuclease that initiates mRNA decay. This Chlorobium phaeovibrioides (strain DSM 265 / 1930) (Prosthecochloris vibrioformis (strain DSM 265)) protein is Ribonuclease Y.